Consider the following 463-residue polypeptide: L-seryl-tRNA(Sec) selenium transferase (463 aa).

Lys-295 bears the N6-(pyridoxal phosphate)lysine mark.

The protein belongs to the SelA family. As to quaternary structure, homodecamer; pentamer of dimers. Binds only one seryl-tRNA(Sec) per dimer. It depends on pyridoxal 5'-phosphate as a cofactor.

It is found in the cytoplasm. It carries out the reaction L-seryl-tRNA(Sec) + selenophosphate + H(+) = L-selenocysteinyl-tRNA(Sec) + phosphate. The protein operates within aminoacyl-tRNA biosynthesis; selenocysteinyl-tRNA(Sec) biosynthesis; selenocysteinyl-tRNA(Sec) from L-seryl-tRNA(Sec) (bacterial route): step 1/1. Functionally, converts seryl-tRNA(Sec) to selenocysteinyl-tRNA(Sec) required for selenoprotein biosynthesis. The protein is L-seryl-tRNA(Sec) selenium transferase of Salmonella enteritidis PT4 (strain P125109).